The chain runs to 77 residues: MARVCQVTGKGPMVGNNVSHANNKTKRRFLPNLQYRRFWLETENRWVRLRVTNAALRLIDKVGIEQVVSDLRAKGEL.

Belongs to the bacterial ribosomal protein bL28 family.

This chain is Large ribosomal subunit protein bL28, found in Methylibium petroleiphilum (strain ATCC BAA-1232 / LMG 22953 / PM1).